The chain runs to 150 residues: MSDNHTLHIEEILDLLPHRYPFLLVDRVLDFEEGKFLRAVKNVSFNEPFFQGHFPGKPIFPGVLILEAMAQATGILAFRSVGKLEPNELYYFAAIDGARFKRPVVPGDQMILEVEFIKERRGVARCRGVAKVDGEIACEAEMMCARRREV.

His-53 is a catalytic residue.

Belongs to the thioester dehydratase family. FabZ subfamily.

The protein resides in the cytoplasm. The enzyme catalyses a (3R)-hydroxyacyl-[ACP] = a (2E)-enoyl-[ACP] + H2O. In terms of biological role, involved in unsaturated fatty acids biosynthesis. Catalyzes the dehydration of short chain beta-hydroxyacyl-ACPs and long chain saturated and unsaturated beta-hydroxyacyl-ACPs. This chain is 3-hydroxyacyl-[acyl-carrier-protein] dehydratase FabZ, found in Photorhabdus laumondii subsp. laumondii (strain DSM 15139 / CIP 105565 / TT01) (Photorhabdus luminescens subsp. laumondii).